Here is a 254-residue protein sequence, read N- to C-terminus: Pyruvate dehydrogenase complex repressor (254 aa).

Residues 9-77 (PKLSDVIEQQ…QGGGTFVQSS (69 aa)) form the HTH gntR-type domain. A DNA-binding region (H-T-H motif) is located at residues 37-56 (ERELAKQFDVSRPSLREAIQ).

Its function is as follows. Transcriptional repressor for the pyruvate dehydrogenase complex genes aceEF and lpd. The sequence is that of Pyruvate dehydrogenase complex repressor (pdhR) from Escherichia coli O6:H1 (strain CFT073 / ATCC 700928 / UPEC).